We begin with the raw amino-acid sequence, 685 residues long: Probable cysteine desulfurase (685 aa).

The interval 1–282 (MTRSPCSTTS…RDEHEVFDVA (282 aa)) is cargo-loading domain. 2 disordered regions span residues 48-135 (SIRP…TSAG) and 162-185 (PTPA…VPDT). The span at 71-85 (ATAATSAGRTAAGTA) shows a compositional bias: low complexity. Residues 102–121 (LPPPASPAPEAPPQAAPPAP) show a composition bias toward pro residues. Over residues 122-135 (RGSAPDATAATSAG) the composition is skewed to low complexity. Positions 164–178 (PAGPEAPPQSAPPAP) are enriched in pro residues. Position 502 is an N6-(pyridoxal phosphate)lysine (lysine 502). Catalysis depends on cysteine 640, which acts as the Cysteine persulfide intermediate.

The protein belongs to the class-V pyridoxal-phosphate-dependent aminotransferase family. Csd subfamily. As to quaternary structure, isolated from bacteria in a complex with encapsulin 2A (AC I3NID5), strongly suggesting it is found in a type 2A encapsulin nanocompartment. There are 1-2 copies of this protein in each encapsulin shell. The cofactor is pyridoxal 5'-phosphate.

The protein resides in the encapsulin nanocompartment. The protein localises to the cell membrane. It carries out the reaction (sulfur carrier)-H + L-cysteine = (sulfur carrier)-SH + L-alanine. Functionally, cargo protein of a type 2A encapsulin nanocompartment involved in sulfur metabolism. Cysteine desulfurases mobilize the sulfur from L-cysteine to yield L-alanine, an essential step in sulfur metabolism for biosynthesis of a variety of sulfur-containing biomolecules. This chain is Probable cysteine desulfurase, found in Mycolicibacterium paratuberculosis (strain ATCC BAA-968 / K-10) (Mycobacterium paratuberculosis).